Consider the following 498-residue polypeptide: Glycerol kinase (498 aa).

Thr-13 contacts ADP. Residues Thr-13, Thr-14, and Ser-15 each coordinate ATP. Thr-13 is a sn-glycerol 3-phosphate binding site. An ADP-binding site is contributed by Arg-17. Sn-glycerol 3-phosphate-binding residues include Arg-83, Glu-84, Tyr-135, and Asp-244. Residues Arg-83, Glu-84, Tyr-135, Asp-244, and Gln-245 each coordinate glycerol. ADP contacts are provided by Thr-266 and Gly-309. ATP-binding residues include Thr-266, Gly-309, Gln-313, and Gly-410. Residues Gly-410 and Asn-414 each coordinate ADP.

This sequence belongs to the FGGY kinase family.

It catalyses the reaction glycerol + ATP = sn-glycerol 3-phosphate + ADP + H(+). Its pathway is polyol metabolism; glycerol degradation via glycerol kinase pathway; sn-glycerol 3-phosphate from glycerol: step 1/1. With respect to regulation, inhibited by fructose 1,6-bisphosphate (FBP). Key enzyme in the regulation of glycerol uptake and metabolism. Catalyzes the phosphorylation of glycerol to yield sn-glycerol 3-phosphate. The protein is Glycerol kinase of Koribacter versatilis (strain Ellin345).